Here is a 660-residue protein sequence, read N- to C-terminus: Bifunctional polymyxin resistance protein ArnA (660 aa).

Residues 1–304 are formyltransferase ArnAFT; the sequence is MKAVVFAYHD…TLGLVAGARL (304 aa). The active-site Proton donor; for formyltransferase activity is His104. (6R)-10-formyltetrahydrofolate contacts are provided by residues Arg114 and 136–140; that span reads VKRAD. The tract at residues 314-660 is dehydrogenase ArnADH; sequence RRTRVLILGV…QSVEPGDAEE (347 aa). Residues Asp347 and 368–369 contribute to the NAD(+) site; that span reads DI. UDP-alpha-D-glucuronate contacts are provided by residues Ala393, Tyr398, and 432–433; that span reads TS. The active-site Proton acceptor; for decarboxylase activity is Glu434. Residues Arg460, Asn492, 526 to 535, and Tyr613 each bind UDP-alpha-D-glucuronate; that span reads KLIDGGRQKR. The active-site Proton donor; for decarboxylase activity is the Arg619.

It in the N-terminal section; belongs to the Fmt family. UDP-L-Ara4N formyltransferase subfamily. The protein in the C-terminal section; belongs to the NAD(P)-dependent epimerase/dehydratase family. UDP-glucuronic acid decarboxylase subfamily. As to quaternary structure, homohexamer, formed by a dimer of trimers.

The enzyme catalyses UDP-alpha-D-glucuronate + NAD(+) = UDP-beta-L-threo-pentopyranos-4-ulose + CO2 + NADH. It carries out the reaction UDP-4-amino-4-deoxy-beta-L-arabinose + (6R)-10-formyltetrahydrofolate = UDP-4-deoxy-4-formamido-beta-L-arabinose + (6S)-5,6,7,8-tetrahydrofolate + H(+). It functions in the pathway nucleotide-sugar biosynthesis; UDP-4-deoxy-4-formamido-beta-L-arabinose biosynthesis; UDP-4-deoxy-4-formamido-beta-L-arabinose from UDP-alpha-D-glucuronate: step 1/3. The protein operates within nucleotide-sugar biosynthesis; UDP-4-deoxy-4-formamido-beta-L-arabinose biosynthesis; UDP-4-deoxy-4-formamido-beta-L-arabinose from UDP-alpha-D-glucuronate: step 3/3. Its pathway is bacterial outer membrane biogenesis; lipopolysaccharide biosynthesis. Its function is as follows. Bifunctional enzyme that catalyzes the oxidative decarboxylation of UDP-glucuronic acid (UDP-GlcUA) to UDP-4-keto-arabinose (UDP-Ara4O) and the addition of a formyl group to UDP-4-amino-4-deoxy-L-arabinose (UDP-L-Ara4N) to form UDP-L-4-formamido-arabinose (UDP-L-Ara4FN). The modified arabinose is attached to lipid A and is required for resistance to polymyxin and cationic antimicrobial peptides. This chain is Bifunctional polymyxin resistance protein ArnA, found in Erwinia tasmaniensis (strain DSM 17950 / CFBP 7177 / CIP 109463 / NCPPB 4357 / Et1/99).